Reading from the N-terminus, the 312-residue chain is Small kinetochore-associated protein (312 aa).

The tract at residues 1 to 171 (MAAPEAEAQE…PFNKQKPEEE (171 aa)) is disordered. Over residues 131–143 (DVTKVTKSRRENG) the composition is skewed to basic and acidic residues. An interaction with SPAG5 region spans residues 156–312 (LRNSYKPFNK…LEEMEQLLEM (157 aa)). Coiled-coil stretches lie at residues 166–210 (QKPE…LEKF) and 246–287 (LLET…QFLE).

In terms of assembly, part of an astrin (SPAG5)-kinastrin (SKAP) complex containing KNSTRN, SPAG5, PLK1, DYNLL1 and SGO2A. Interacts with SPAG5. Directly binds to microtubules, although at relatively low affinity. Interacts with CENPE; this interaction greatly favors microtubule-binding. Interacts with DSN1/MIS13; leading to localization to kinetochores. Interacts with MAPRE1/EB1; leading to localization to the microtubule plus ends. Interacts with PRPF19. Interacts with DYNLL1. Interacts with MAP4.

The protein localises to the nucleus. It is found in the chromosome. It localises to the centromere. Its subcellular location is the kinetochore. The protein resides in the cytoplasm. The protein localises to the cytoskeleton. It is found in the spindle pole. It localises to the microtubule organizing center. Functionally, essential component of the mitotic spindle required for faithful chromosome segregation and progression into anaphase. Promotes the metaphase-to-anaphase transition and is required for chromosome alignment, normal timing of sister chromatid segregation, and maintenance of spindle pole architecture. The astrin (SPAG5)-kinastrin (SKAP) complex promotes stable microtubule-kinetochore attachments. Required for kinetochore oscillations and dynamics of microtubule plus-ends during live cell mitosis, possibly by forming a link between spindle microtubule plus-ends and mitotic chromosomes to achieve faithful cell division. The sequence is that of Small kinetochore-associated protein (Knstrn) from Mus musculus (Mouse).